Reading from the N-terminus, the 421-residue chain is Testin (421 aa).

A PET domain is found at 92–199 (MILTNPVAAK…GDVKLPCEMD (108 aa)). Residues 133 to 164 (EKQPVAGSEGAQYRKKQLAKQLPAHDQDPSKC) form a disordered region. Over residues 155–164 (PAHDQDPSKC) the composition is skewed to basic and acidic residues. 3 consecutive LIM zinc-binding domains span residues 234–297 (YSCY…CDSE), 299–359 (PRCA…NHAV), and 362–421 (QGCH…KMMS).

Belongs to the prickle / espinas / testin family. Interacts via LIM domain 1 with ZYX. Interacts (via LIM domain 3) with ENAH and VASP. Interacts with ALKBH4, talin, actin, alpha-actinin, GRIP1 and PXN. Interacts (via LIM domain 2) with ACTL7A (via N-terminus). Heterodimer with ACTL7A; the heterodimer interacts with ENAH to form a heterotrimer.

The protein resides in the cytoplasm. The protein localises to the cell junction. It is found in the focal adhesion. Its function is as follows. Scaffold protein that may play a role in cell adhesion, cell spreading and in the reorganization of the actin cytoskeleton. Plays a role in the regulation of cell proliferation. May act as a tumor suppressor. This chain is Testin (TES), found in Callithrix jacchus (White-tufted-ear marmoset).